The primary structure comprises 331 residues: Phosphate acyltransferase (331 aa).

Belongs to the PlsX family. As to quaternary structure, homodimer. Probably interacts with PlsY.

The protein resides in the cytoplasm. The enzyme catalyses a fatty acyl-[ACP] + phosphate = an acyl phosphate + holo-[ACP]. It participates in lipid metabolism; phospholipid metabolism. Its function is as follows. Catalyzes the reversible formation of acyl-phosphate (acyl-PO(4)) from acyl-[acyl-carrier-protein] (acyl-ACP). This enzyme utilizes acyl-ACP as fatty acyl donor, but not acyl-CoA. In Lactococcus lactis subsp. cremoris (strain SK11), this protein is Phosphate acyltransferase.